A 279-amino-acid polypeptide reads, in one-letter code: Protein PHOTOPERIODIC CONTROL OF HYPOCOTYL 1-LIKE (279 aa).

In terms of assembly, interacts with light-activated phyB. Binds directly to PIF1 and COP1. Post-translationally, ubiquitinated by COP1 in darkness; this leads to proteasomal degradation. As to expression, mainly expressed in cotyledons, hypocotyls, leaves.

The protein localises to the nucleus. Functionally, together with PCH1, regulates growth and development adaptation to the ambient environment by controlling negatively phytochrome B (phyB) dark reversion, a temperature-dependent thermal relaxation process during which phyB reverts from the active to the inactive state. Contributes to red (R) light-triggered photomorphogenesis. Promotes various light responses such as seed germination, hypocotyl gravitropism and chlorophyll biosynthesis, via direct interaction with PIF1 and COP1. Prevents DNA-binding ability of PIF1 to negatively regulate the expressions of its target genes. Facilitates the physical interaction between phyB and PIF1 and the subsequent light-induced degradation of PIF1. The polypeptide is Protein PHOTOPERIODIC CONTROL OF HYPOCOTYL 1-LIKE (Arabidopsis thaliana (Mouse-ear cress)).